The chain runs to 360 residues: 3-dehydroquinate synthase (360 aa).

Residues Asp69–Lys74, Gly103–Asp107, Thr127–Thr128, Lys140, Lys149, and Cys167–Thr170 each bind NAD(+). Glu182, His245, and His262 together coordinate Zn(2+).

This sequence belongs to the sugar phosphate cyclases superfamily. Dehydroquinate synthase family. Requires Co(2+) as cofactor. Zn(2+) serves as cofactor. The cofactor is NAD(+).

Its subcellular location is the cytoplasm. It carries out the reaction 7-phospho-2-dehydro-3-deoxy-D-arabino-heptonate = 3-dehydroquinate + phosphate. The protein operates within metabolic intermediate biosynthesis; chorismate biosynthesis; chorismate from D-erythrose 4-phosphate and phosphoenolpyruvate: step 2/7. Its function is as follows. Catalyzes the conversion of 3-deoxy-D-arabino-heptulosonate 7-phosphate (DAHP) to dehydroquinate (DHQ). This Aeromonas hydrophila subsp. hydrophila (strain ATCC 7966 / DSM 30187 / BCRC 13018 / CCUG 14551 / JCM 1027 / KCTC 2358 / NCIMB 9240 / NCTC 8049) protein is 3-dehydroquinate synthase.